A 118-amino-acid polypeptide reads, in one-letter code: UPF0342 protein BpOF4_11360 (118 aa).

This sequence belongs to the UPF0342 family.

The polypeptide is UPF0342 protein BpOF4_11360 (Alkalihalophilus pseudofirmus (strain ATCC BAA-2126 / JCM 17055 / OF4) (Bacillus pseudofirmus)).